The following is a 297-amino-acid chain: Ectoine dioxygenase (297 aa).

Glutamine 131 provides a ligand contact to L-ectoine. Lysine 137 lines the 2-oxoglutarate pocket. 3 residues coordinate Fe cation: histidine 148, aspartate 150, and histidine 249.

The protein belongs to the PhyH family. EctD subfamily. As to quaternary structure, homodimer. The cofactor is Fe(2+).

The catalysed reaction is L-ectoine + 2-oxoglutarate + O2 = 5-hydroxyectoine + succinate + CO2. Functionally, involved in the biosynthesis of 5-hydroxyectoine, called compatible solute, which helps organisms to survive extreme osmotic stress by acting as a highly soluble organic osmolyte. Catalyzes the 2-oxoglutarate-dependent selective hydroxylation of L-ectoine to yield (4S,5S)-5-hydroxyectoine. In Streptomyces anulatus (Streptomyces chrysomallus), this protein is Ectoine dioxygenase.